Here is a 2068-residue protein sequence, read N- to C-terminus: Lipoxygenase homology domain-containing protein 1 (2068 aa).

15 PLAT domains span residues 43 to 160, 172 to 287, 296 to 412, 425 to 540, 553 to 673, 684 to 803, 814 to 934, 970 to 1088, 1101 to 1226, 1255 to 1373, 1422 to 1540, 1553 to 1668, 1680 to 1798, 1811 to 1932, and 1949 to 2065; these read KVYE…RDLL, NKYE…RDIL, ITYI…RQLY, YPWS…REMT, ARYR…RELL, FRYH…VELY, VHYE…RELL, TTFS…RDLF, VPYE…RELV, VLYS…RLFY, IPYY…RVFD, VLYE…CEIC, TSYT…RDFA, TTYE…VFEV, and VKYE…RELF.

Expressed in the inner ear, specifically in hair cells. Higher expression is detected in the cochlea.

It localises to the cell projection. The protein localises to the stereocilium. In terms of biological role, required for normal function of hair cells in the inner ear. The polypeptide is Lipoxygenase homology domain-containing protein 1 (Loxhd1) (Mus musculus (Mouse)).